Here is a 345-residue protein sequence, read N- to C-terminus: Myb/SANT-like DNA-binding domain-containing protein 4 (345 aa).

One can recognise a Myb-like domain in the interval Leu-4 to Arg-77. Residue Lys-9 forms a Glycyl lysine isopeptide (Lys-Gly) (interchain with G-Cter in SUMO2) linkage. At Ser-106 the chain carries Phosphoserine. Glycyl lysine isopeptide (Lys-Gly) (interchain with G-Cter in SUMO2) cross-links involve residues Lys-114 and Lys-142. The tract at residues Val-141 to Asn-175 is disordered. Residue Thr-188 is modified to Phosphothreonine. Residues His-202 to Leu-344 are a coiled coil. Glycyl lysine isopeptide (Lys-Gly) (interchain with G-Cter in SUMO2) cross-links involve residues Lys-237, Lys-254, and Lys-273.

This is Myb/SANT-like DNA-binding domain-containing protein 4 (Msantd4) from Rattus norvegicus (Rat).